The primary structure comprises 426 residues: Chromatin structure-remodeling complex subunit SFH1 (426 aa).

Phosphoserine is present on Ser-78. The interval 201–242 is interaction with STH1; that stretch reads AIMIPITLDIEHMGHTIKDQFLWNYNDDSISPEEFASIYCKD.

Belongs to the SNF5 family. As to quaternary structure, interacts directly with STH1. Component of the two forms of the RSC complex composed of at least either RSC1 or RSC2, and ARP7, ARP9, LDB7, NPL6, RSC3, RSC30, RSC4, RSC58, RSC6, RSC8, RSC9, SFH1, STH1, HTL1 and probably RTT102. The complexes interact with histone and histone variant components of centromeric chromatin. Phosphorylated in the G1 phase.

The protein resides in the nucleus. Component of the chromatin structure-remodeling complex (RSC), which is involved in transcription regulation and nucleosome positioning. RSC is responsible for the transfer of a histone octamer from a nucleosome core particle to naked DNA. The reaction requires ATP and involves an activated RSC-nucleosome intermediate. Remodeling reaction also involves DNA translocation, DNA twist and conformational change. As a reconfigurer of centromeric and flanking nucleosomes, RSC complex is required both for proper kinetochore function in chromosome segregation and, via a PKC1-dependent signaling pathway, for organization of the cellular cytoskeleton. This subunit is essential for mitotic growth and required for cell cycle progression. This Saccharomyces cerevisiae (strain ATCC 204508 / S288c) (Baker's yeast) protein is Chromatin structure-remodeling complex subunit SFH1 (SFH1).